We begin with the raw amino-acid sequence, 404 residues long: Acyl-[acyl-carrier-protein] desaturase 7, chloroplastic (404 aa).

A chloroplast-targeting transit peptide spans 1 to 39; the sequence is MAASATTSTLAVTMFGYPNRNCHLKPPATATLRFWRSAA. Fe cation-binding residues include E138, E176, H179, E229, E262, and H265.

This sequence belongs to the fatty acid desaturase type 2 family. Homodimer. It depends on Fe(2+) as a cofactor.

Its subcellular location is the plastid. It is found in the chloroplast. The protein operates within lipid metabolism; fatty acid metabolism. Functionally, introduces a cis double bond in the acyl chain of an acyl-[acyl-carrier protein]. This chain is Acyl-[acyl-carrier-protein] desaturase 7, chloroplastic, found in Oryza sativa subsp. indica (Rice).